The following is a 69-amino-acid chain: Large ribosomal subunit protein uL29 (69 aa).

This sequence belongs to the universal ribosomal protein uL29 family.

This is Large ribosomal subunit protein uL29 from Staphylococcus saprophyticus subsp. saprophyticus (strain ATCC 15305 / DSM 20229 / NCIMB 8711 / NCTC 7292 / S-41).